Here is a 422-residue protein sequence, read N- to C-terminus: MTVKTTVSTKDIDEAFLRLKDIVKETPLQLDHYLSQKYDCKVYLKREDLQWVRSFKLRGAYNAISVLSDEAKSKGITCASAGNHAQGVAYTAKKLNLNAVIFMPVTTPLQKVNQVKFFGNSNVEVVLTGDTFDHCLAEALTYTSEHQMNFIDPFNNVHTISGQGTLAKEMLEQSKTDNVNFDYLFAAIGGGGLISGISTYFKTYSPTTKIIGVEPSGASSMYESVVVNNQVVTLPNIDKFVDGASVARVGDITFEIAKENVDDYVQVDEGAVCSTILDMYSKQAIVAEPAGALSVSALENYKDHIKGKTVVCVISGGNNDINRMKEIEERSLLYEEMKHYFILNFPQRPGALREFVNDVLGPQDDITKFEYLKKSSQNTGTVIIGIQLKDHDDLIQLKQRVNHFDPSNIYINENKMLYSLLI.

Position 56 is an N6-(pyridoxal phosphate)lysine (K56). Residues N83, 189 to 193, and S315 contribute to the pyridoxal 5'-phosphate site; that span reads GGGGL. One can recognise an ACT-like domain in the interval 339-413; it reads HYFILNFPQR…FDPSNIYINE (75 aa).

This sequence belongs to the serine/threonine dehydratase family. As to quaternary structure, homotetramer. The cofactor is pyridoxal 5'-phosphate.

It carries out the reaction L-threonine = 2-oxobutanoate + NH4(+). It participates in amino-acid biosynthesis; L-isoleucine biosynthesis; 2-oxobutanoate from L-threonine: step 1/1. Functionally, catalyzes the anaerobic formation of alpha-ketobutyrate and ammonia from threonine in a two-step reaction. The first step involved a dehydration of threonine and a production of enamine intermediates (aminocrotonate), which tautomerizes to its imine form (iminobutyrate). Both intermediates are unstable and short-lived. The second step is the nonenzymatic hydrolysis of the enamine/imine intermediates to form 2-ketobutyrate and free ammonia. In the low water environment of the cell, the second step is accelerated by RidA. The protein is L-threonine dehydratase biosynthetic IlvA (ilvA) of Staphylococcus aureus (strain MSSA476).